A 78-amino-acid polypeptide reads, in one-letter code: Beta-defensin 105A (78 aa).

The first 27 residues, 1 to 27, serve as a signal peptide directing secretion; sequence MALIRKTFYFLFAVFFILVQLPSGCQA. 3 cysteine pairs are disulfide-bonded: cysteine 43/cysteine 74, cysteine 53/cysteine 67, and cysteine 57/cysteine 73.

It belongs to the beta-defensin family.

The protein localises to the secreted. In terms of biological role, has antimicrobial activity. In Gorilla gorilla gorilla (Western lowland gorilla), this protein is Beta-defensin 105A (DEFB105A).